A 604-amino-acid chain; its full sequence is Ras guanine nucleotide exchange factor H (604 aa).

Polar residues predominate over residues 1 to 26 (MSNTNINVQSSTPKKSLGSSQYSLAG). The tract at residues 1 to 61 (MSNTNINVQS…QENSIDDSGS (61 aa)) is disordered. Over residues 27 to 49 (SSSSNLNNINNNNNNNNNNNNNS) the composition is skewed to low complexity. Polar residues predominate over residues 50–61 (TGQENSIDDSGS). Positions 115–147 (NDTMLLKLIMQYFHEENLTTSLKKIQEETKVQF) constitute a LisH domain. In terms of domain architecture, N-terminal Ras-GEF spans 221-335 (PDGTIKAATF…AVINLKIENY (115 aa)). One can recognise a Ras-GEF domain in the interval 365–591 (DEEEIARQLC…EQPQLTLDLS (227 aa)).

Component of the Sca1 complex composed of at least gefA, gefH, scaA, phr, and the protein phosphatase 2A subunits pppA and pho2B. Interacts directly with gefA and phr.

The protein resides in the cell membrane. Its function is as follows. Promotes the exchange of Ras-bound GDP by GTP. Component of the Sca1 complex, a regulator of cell motility, chemotaxis and signal relay. The Sca1 complex is recruited to the plasma membrane in a chemoattractant- and F-actin-dependent manner and is enriched at the leading edge of chemotaxing cells where it regulates F-actin dynamics and signal relay by controlling the activation of rasC and the downstream target of rapamycin complex 2 (TORC2)-Akt/protein kinase B (PKB) pathway. The polypeptide is Ras guanine nucleotide exchange factor H (gefH) (Dictyostelium discoideum (Social amoeba)).